Consider the following 1306-residue polypeptide: MTFYNQIVDKGRLKKLISWAYRNYGAARSSQVADNLKDLGFRYATKAGVSISIDDLTVPPTKRGMLDSAEKEINITEARYARGEITEVERFQKVIDTWNSTSEELKDEVVRNFRQTDPLNSVYMMAFSGARGNMSQVRQLVGMRGLMADPQGQIIDQPIKTNFREGLTVTEYVISSYGARKGLVDTALRTADSGYLTRRLVDVSQDVIVREIDCGTRRGLKVTAMKDGDRVKIALGDRLLGRVLAEDVMVGDEVIASRNQSIDAALAAKIGKSVESVMVRSPLTCEAARSVCRCCYGWSLATGRPVDLGEAVGIIAAQSIGEPGTQLTMRTFHTGGVFTGEVAEQIKAPDHGTVKWGKGLSTRKVRTRHGEDAFQVELAGDLIWTPTGSGKKMTYSVTPGSVLFAADGDTVEKDKMLAEVTAAKSTRSTERATKDVSTDLAGEVFFANLIAEEKTDRQGNTTHIAQRGGLVWVLSGEVYNLPPGAEPVVSNGDEVAEGTVLAETKLISVNGGVVRYQPQSREIDIITASVLLDQAEVRKESTGGHEQYVIYTADGQRFLLKATPETKVQNHAIIAELIDDRYQTTTGGMLRYGGIEVAKGSRKTGYEVVQGGTLLWVPEETHEVNKDISLLVVEDGQYVEAGTEVVKDIFCQCSGAIEVVQKNDILREIIIKPGEFHLDVDPDEVSYKNEDLIPPGTEVLPGVVTTDLRQVEWIESTEGLGLLLRPVEEYPVSNEPAAPSQGSINEEEVGRHIELRSVQRLFYKDGERVKSVDGIHLLSTQLVLEIETGSEQAAANLAADIELKNDEEEDCQRLQLVILESLILRRDLDTDPHGGTITTSVLVTDGDQIAPGAVVAKTEIQCREEGEVRGIRRGLEAVRRVLIVRDEDLEIITLKEKPTVAKDDLIVAGTEFAPGVVAAESGLVVAVNQGEEGYEIKLRLARPYRVSPGAILHIADGDLVQRGDNLVLLVYERAKTGDIIQGLPRIEELLEARKPKEACVLSRKPGVCQVEYLEDESVDVKVIEDDGTVSEYPILLNQNVIVSDNQRVDVGEHLTDGPANPHELLEVFFDYYVDKKGVYEAALIGLQAAQKFLVDQVQSVYQSQGIDISDKHIEVIVRQMTAKVRVDDGGDTTMLPGELVELRQIEQVNEAMAITGGAPARYTPVLLGITKASLNTDSFISAASFQETTRVLTEAAIEGKSDWLRGLKENVIIGRLIPAGTGFNAHEEMVMGTLDNGEDSLNNRYGQGERDNNNSDKKPPNRLIGATLDEVDENMILDDNIARAYTEADPPWSVESKQEKDDDDDK.

Zn(2+) is bound by residues Cys214, Cys285, Cys292, and Cys295. Disordered stretches follow at residues 1234 to 1263 and 1281 to 1306; these read LDNG…PNRL and IARA…DDDK. Residues 1247–1259 show a composition bias toward basic and acidic residues; it reads QGERDNNNSDKKP.

Belongs to the RNA polymerase beta' chain family. RpoC2 subfamily. As to quaternary structure, in cyanobacteria the RNAP catalytic core is composed of 2 alpha, 1 beta, 1 beta', 1 gamma and 1 omega subunit. When a sigma factor is associated with the core the holoenzyme is formed, which can initiate transcription. The cofactor is Zn(2+).

The enzyme catalyses RNA(n) + a ribonucleoside 5'-triphosphate = RNA(n+1) + diphosphate. In terms of biological role, DNA-dependent RNA polymerase catalyzes the transcription of DNA into RNA using the four ribonucleoside triphosphates as substrates. The protein is DNA-directed RNA polymerase subunit beta' of Crocosphaera subtropica (strain ATCC 51142 / BH68) (Cyanothece sp. (strain ATCC 51142)).